Reading from the N-terminus, the 551-residue chain is Adenine deaminase (551 aa).

The protein belongs to the metallo-dependent hydrolases superfamily. Adenine deaminase family. It depends on Mn(2+) as a cofactor.

The catalysed reaction is adenine + H2O + H(+) = hypoxanthine + NH4(+). The sequence is that of Adenine deaminase from Leuconostoc citreum (strain KM20).